The primary structure comprises 191 residues: Calcium and integrin-binding protein 1 (191 aa).

Residue G2 is the site of N-myristoyl glycine attachment. 2 consecutive EF-hand domains span residues 103-138 and 148-183; these read TPDI…LTGE and EMKQ…SPDF. Ca(2+)-binding residues include D116, D118, D120, T122, D127, D161, D163, D165, T167, and E172. At D118 the chain carries Phosphoserine.

Monomer. Interacts with MYO1C. Interacts (via C-terminal region) with PPP3R1 and CACNA1C; the interactions increase upon cardiomyocytes hypertrophy. Interacts with the heterodimeric integrin alpha-IIb/beta3 (ITGA2B-ITGB3). Interacts with ITGA2B (via cytoplasmic domain); the interaction is direct and calcium-dependent. Interacts with the protein kinases PLK2/SNK and PRKDC (via the region immediately upstream of the kinase domain). Interacts with PLK3; the interaction inhibits PLK3 kinase activity. Interacts with PSEN2. Interacts (via C-terminus) with F8. Interacts with NBR1 (via C-terminus). Interacts with FEZ1 (via C-terminus). Interacts with UBR5 (via C-terminus); the interaction is sensitive to DNA damage, and may target CIB1 for ubiquitin-mediated degradation. Interacts with IFI6; the interaction is direct. Interacts with BCL2. Interacts with ITPR3; the interaction occurs in a calcium-dependent manner. Interacts with PTK2/FAK1. Interacts with MAP3K5; the interaction inhibits MAP3K5 activation by phosphorylation, and its subsequent interaction with TRAF2. Isoform 2 interacts with PRKD2 (via N-terminal AP-rich region), PTK2/FAK1 and PAK1. Interacts with TAS1R2 (via C-terminus); the interaction is independent of the myristoylation state of CIB1. Interacts (via C-terminal region) with STMN2 (via the N-terminal region); the interaction is direct, occurs in a calcium-dependent manner and attenuates the STMN2-induced neurite outgrowth inhibition. Interacts with SPHK1, the interaction occurs in a calcium-dependent manner. Interacts with ITGA2B (via C-terminal cytoplasmic tail); the interaction occurs upon platelet aggregation and is stabilized/increased in a calcium and magnesium-dependent manner. Interacts with PAK1 (via N-terminal region); the interaction is direct and occurs in a calcium-dependent manner. Interacts with RAC3 (via C-terminal region); the interaction induces their association with the cytoskeleton upon alpha-IIb/beta3 integrin-mediated adhesion. Interacts with ITGA5 and ITGAV. Interacts and forms a complex with TMC6 and TMC8; the interaction stabilizes each component of the complex. As to quaternary structure, (Microbial infection) Interacts with human papillomavirus 4/HPV4 protein E8, human papillomavirus 5/HPV5 protein E1, and human papillomavirus 16/HPV16 proteins E2 and E5. Post-translationally, phosphorylation of isoform 2 at Ser-118 by PRKD2 increases its ability to stimulate tumor angiogenesis. In terms of tissue distribution, ubiquitously expressed. Expressed in the epidermis, hair follicles and keratinocytes. Detected in platelets and in cell lines of megakaryocytic and erythrocytic lineages. Both isoform 1 and isoform 2 are detected in various cancer cell lines, with isoform 2 being the predominant form (at protein level).

The protein resides in the membrane. Its subcellular location is the cell membrane. It is found in the sarcolemma. It localises to the apical cell membrane. The protein localises to the cell projection. The protein resides in the ruffle membrane. Its subcellular location is the filopodium tip. It is found in the growth cone. It localises to the lamellipodium. The protein localises to the cytoplasm. The protein resides in the cytoskeleton. Its subcellular location is the microtubule organizing center. It is found in the centrosome. It localises to the perinuclear region. The protein localises to the nucleus. The protein resides in the neuron projection. Its subcellular location is the perikaryon. It is found in the golgi apparatus. It localises to the trans-Golgi network. In terms of biological role, calcium-binding protein that plays a role in the regulation of numerous cellular processes, such as cell differentiation, cell division, cell proliferation, cell migration, thrombosis, angiogenesis, cardiac hypertrophy and apoptosis. Involved in bone marrow megakaryocyte differentiation by negatively regulating thrombopoietin-mediated signaling pathway. Participates in the endomitotic cell cycle of megakaryocyte, a form of mitosis in which both karyokinesis and cytokinesis are interrupted. Plays a role in integrin signaling by negatively regulating alpha-IIb/beta3 activation in thrombin-stimulated megakaryocytes preventing platelet aggregation. Up-regulates PTK2/FAK1 activity, and is also needed for the recruitment of PTK2/FAK1 to focal adhesions; it thus appears to play an important role in focal adhesion formation. Positively regulates cell migration on fibronectin in a CDC42-dependent manner, the effect being negatively regulated by PAK1. Functions as a negative regulator of stress activated MAP kinase (MAPK) signaling pathways. Down-regulates inositol 1,4,5-trisphosphate receptor-dependent calcium signaling. Involved in sphingosine kinase SPHK1 translocation to the plasma membrane in a N-myristoylation-dependent manner preventing TNF-alpha-induced apoptosis. Regulates serine/threonine-protein kinase PLK3 activity for proper completion of cell division progression. Plays a role in microtubule (MT) dynamics during neuronal development; disrupts the MT depolymerization activity of STMN2 attenuating NGF-induced neurite outgrowth and the MT reorganization at the edge of lamellipodia. Promotes cardiomyocyte hypertrophy via activation of the calcineurin/NFAT signaling pathway. Stimulates calcineurin PPP3R1 activity by mediating its anchoring to the sarcolemma. In ischemia-induced (pathological or adaptive) angiogenesis, stimulates endothelial cell proliferation, migration and microvessel formation by activating the PAK1 and ERK1/ERK2 signaling pathway. Also promotes cancer cell survival and proliferation. May regulate cell cycle and differentiation of spermatogenic germ cells, and/or differentiation of supporting Sertoli cells. Forms a complex with TMC6/EVER1 and TMC8/EVER2 in lymphocytes and keratynocytes where CIB1 stabilizes TMC6 and TMC8 levels and reciprocally. Functionally, acts as a restriction factor that promotes keratinocyte-intrinsic immunity to human beta-papillomaviruses (HPVs). Its function is as follows. Plays a regulatory role in angiogenesis and tumor growth by mediating PKD/PRKD2-induced vascular endothelial growth factor A (VEGFA) secretion. This chain is Calcium and integrin-binding protein 1 (CIB1), found in Homo sapiens (Human).